Here is a 159-residue protein sequence, read N- to C-terminus: Putative 4-hydroxy-4-methyl-2-oxoglutarate aldolase (159 aa).

Substrate contacts are provided by residues glycine 74–leucine 77 and arginine 96. Aspartate 97 contributes to the a divalent metal cation binding site.

Belongs to the class II aldolase/RraA-like family. As to quaternary structure, homotrimer. A divalent metal cation serves as cofactor.

The catalysed reaction is 4-hydroxy-4-methyl-2-oxoglutarate = 2 pyruvate. The enzyme catalyses oxaloacetate + H(+) = pyruvate + CO2. In terms of biological role, catalyzes the aldol cleavage of 4-hydroxy-4-methyl-2-oxoglutarate (HMG) into 2 molecules of pyruvate. Also contains a secondary oxaloacetate (OAA) decarboxylase activity due to the common pyruvate enolate transition state formed following C-C bond cleavage in the retro-aldol and decarboxylation reactions. The sequence is that of Putative 4-hydroxy-4-methyl-2-oxoglutarate aldolase from Bacillus anthracis.